A 63-amino-acid chain; its full sequence is Beta-defensin 38 (63 aa).

An N-terminal signal peptide occupies residues 1 to 21 (MKISCFLLLVLSLYLFQVNQA). 3 disulfide bridges follow: Cys-29-Cys-58, Cys-36-Cys-51, and Cys-41-Cys-59.

Belongs to the beta-defensin family.

Its subcellular location is the secreted. Has antibacterial activity. This is Beta-defensin 38 (Defb38) from Rattus norvegicus (Rat).